A 601-amino-acid polypeptide reads, in one-letter code: Beta-phellandrene synthase (601 aa).

A chloroplast-targeting transit peptide spans Met-1–Arg-35. Mn(2+)-binding residues include Asp-356 and Asp-360. A DDXXD motif motif is present at residues Asp-356–Asp-360. 2 homodimerization regions span residues Tyr-362–Leu-368 and Glu-434–Pro-471. Asp-499 and Glu-507 together coordinate Mn(2+).

The protein belongs to the terpene synthase family. In terms of assembly, homodimer. Requires Mn(2+) as cofactor. Mg(2+) serves as cofactor. In terms of tissue distribution, expressed in peltate glandular trichomes. Present at low levels in flowers and stems.

It localises to the plastid. The protein resides in the chloroplast. The catalysed reaction is (2E)-geranyl diphosphate = beta-phellandrene + diphosphate. It carries out the reaction (2E)-geranyl diphosphate = (1R,5R)-sabinene + diphosphate. It participates in secondary metabolite biosynthesis; terpenoid biosynthesis. Involved in the biosynthesis of phenolic monoterpenes natural products. Monoterpene synthase that catalyzes mainly the formation of olefins such as sabinene and beta-phellandrene, and minor amounts of other monoterpenes (e.g. myrcene, gamma-terpinene, alpha-thujene and alpha-pinene) from geranyl diphosphate (GPP). This is Beta-phellandrene synthase from Origanum vulgare (Wild marjoram).